The primary structure comprises 250 residues: Superoxide dismutase 1 copper chaperone (250 aa).

The 64-residue stretch at 4–67 (SFEIVFAVPM…AIQSTGKDAI (64 aa)) folds into the HMA domain. Cu cation is bound by residues C15, C18, C229, and C231.

This sequence belongs to the CCS1 family. Cu(2+) is required as a cofactor.

It is found in the cytoplasm. Functionally, copper chaperone for superoxide dismutase 1 (SOD1). Binds copper ions and delivers them specifically to SOD1. The protein is Superoxide dismutase 1 copper chaperone (CCS1) of Debaryomyces hansenii (strain ATCC 36239 / CBS 767 / BCRC 21394 / JCM 1990 / NBRC 0083 / IGC 2968) (Yeast).